A 123-amino-acid chain; its full sequence is Small ribosomal subunit protein uS12 (123 aa).

Position 89 is a 3-methylthioaspartic acid (Asp-89).

The protein belongs to the universal ribosomal protein uS12 family. As to quaternary structure, part of the 30S ribosomal subunit. Contacts proteins S8 and S17. May interact with IF1 in the 30S initiation complex.

With S4 and S5 plays an important role in translational accuracy. In terms of biological role, interacts with and stabilizes bases of the 16S rRNA that are involved in tRNA selection in the A site and with the mRNA backbone. Located at the interface of the 30S and 50S subunits, it traverses the body of the 30S subunit contacting proteins on the other side and probably holding the rRNA structure together. The combined cluster of proteins S8, S12 and S17 appears to hold together the shoulder and platform of the 30S subunit. The sequence is that of Small ribosomal subunit protein uS12 from Orientia tsutsugamushi (strain Ikeda) (Rickettsia tsutsugamushi).